A 235-amino-acid polypeptide reads, in one-letter code: Adenosine 5'-phosphosulfate reductase (235 aa).

Positions 121, 122, 204, and 207 each coordinate [4Fe-4S] cluster. The Nucleophile; cysteine thiosulfonate intermediate role is filled by Cys230.

This sequence belongs to the PAPS reductase family. CysH subfamily. [4Fe-4S] cluster serves as cofactor.

The protein localises to the cytoplasm. It carries out the reaction [thioredoxin]-disulfide + sulfite + AMP + 2 H(+) = adenosine 5'-phosphosulfate + [thioredoxin]-dithiol. It functions in the pathway sulfur metabolism; hydrogen sulfide biosynthesis; sulfite from sulfate. Catalyzes the formation of sulfite from adenosine 5'-phosphosulfate (APS) using thioredoxin as an electron donor. This Anoxybacillus flavithermus (strain DSM 21510 / WK1) protein is Adenosine 5'-phosphosulfate reductase.